We begin with the raw amino-acid sequence, 393 residues long: 6-hydroxy-3-succinoylpyridine 3-monooxygenase HspB (393 aa).

Residues arginine 6–alanine 35 and methionine 277–aspartate 287 contribute to the FAD site.

Belongs to the PheA/TfdB FAD monooxygenase family. In terms of assembly, homodimer. It depends on FAD as a cofactor.

It carries out the reaction 4-(6-hydroxypyridin-3-yl)-4-oxobutanoate + 2 NADH + O2 + 2 H(+) = 2,5-dihydroxypyridine + succinate semialdehyde + 2 NAD(+) + H2O. It participates in alkaloid degradation; nicotine degradation. Its activity is regulated as follows. Inhibited by Cu(2+) and Zn(2+). Its function is as follows. Involved in the nicotine degradation. Catalyzes the cleavage of 6-hydroxy-3-succinoylpyridine (HSP) by incorporation of oxygen at the 3-position to produce to 2,5-dihydroxypyridine (DHP) and succinic semialdehyde. The polypeptide is 6-hydroxy-3-succinoylpyridine 3-monooxygenase HspB (Pseudomonas putida (strain DSM 28022 / S16)).